The sequence spans 501 residues: Cytochrome P450 71B23 (501 aa).

The helical transmembrane segment at 1–21 (MSIFLCFLLLLLLLLVTIIFT) threads the bilayer. Cys-443 provides a ligand contact to heme.

This sequence belongs to the cytochrome P450 family. Heme serves as cofactor.

It is found in the membrane. In Arabidopsis thaliana (Mouse-ear cress), this protein is Cytochrome P450 71B23 (CYP71B23).